Here is a 245-residue protein sequence, read N- to C-terminus: 1-(5-phosphoribosyl)-5-[(5-phosphoribosylamino)methylideneamino] imidazole-4-carboxamide isomerase (245 aa).

The Proton acceptor role is filled by Asp-7. The active-site Proton donor is Asp-129.

This sequence belongs to the HisA/HisF family.

Its subcellular location is the cytoplasm. The enzyme catalyses 1-(5-phospho-beta-D-ribosyl)-5-[(5-phospho-beta-D-ribosylamino)methylideneamino]imidazole-4-carboxamide = 5-[(5-phospho-1-deoxy-D-ribulos-1-ylimino)methylamino]-1-(5-phospho-beta-D-ribosyl)imidazole-4-carboxamide. The protein operates within amino-acid biosynthesis; L-histidine biosynthesis; L-histidine from 5-phospho-alpha-D-ribose 1-diphosphate: step 4/9. In Shigella boydii serotype 18 (strain CDC 3083-94 / BS512), this protein is 1-(5-phosphoribosyl)-5-[(5-phosphoribosylamino)methylideneamino] imidazole-4-carboxamide isomerase.